The primary structure comprises 292 residues: 33 kDa chaperonin (292 aa).

2 disulfide bridges follow: cysteine 230–cysteine 232 and cysteine 263–cysteine 266.

This sequence belongs to the HSP33 family. In terms of processing, under oxidizing conditions two disulfide bonds are formed involving the reactive cysteines. Under reducing conditions zinc is bound to the reactive cysteines and the protein is inactive.

It localises to the cytoplasm. Its function is as follows. Redox regulated molecular chaperone. Protects both thermally unfolding and oxidatively damaged proteins from irreversible aggregation. Plays an important role in the bacterial defense system toward oxidative stress. The protein is 33 kDa chaperonin of Enterobacter sp. (strain 638).